The following is a 316-amino-acid chain: Neutrophil-stimulating factor 1 (316 aa).

Residues 1–21 form the signal peptide; it reads METSLPITVVFLIVLITGAQT. Residues 126-316 form an involved in interaction with human CD47 region; the sequence is HGEMLERMTA…WFAVSWNDRG (191 aa). Residue asparagine 169 is glycosylated (N-linked (GlcNAc...) asparagine).

Interacts with human CD4. Interacts with human CD47; the interaction results in inhibition of phagocytosis activity of host macrophages. Female salivary gland (at protein level). Saliva (at protein level). Some expression in ovary and midgut (at protein level).

The protein resides in the secreted. In terms of biological role, activates host neutrophils; induces expression of IL1B and CXCL2 at the bite site. Promotes activation of human CD4(+) T-cells. Inhibits phagocytosis activity of host macrophages via the interaction with CD47 receptor on their surface. Suppresses expression of pro-inflammatory cytokines, such as IFN-gamma/IFNG, IL2, TNF-alpha/TNF, IL12B, IL8/CXCL8, IL6, in host white blood cells. Reduces host polymorphonuclear neutrophil chemotaxis induced by N-formylmethionine-leucylphenylalanine (fMLF). Reduces CD11b/ITGAM expression in fMLF-induced host polymorphonuclear neutrophils. Its function is as follows. (Microbial infection) Enhances early replication of Zika virus in the host. The chain is Neutrophil-stimulating factor 1 from Aedes aegypti (Yellowfever mosquito).